A 475-amino-acid polypeptide reads, in one-letter code: Ankyrin repeat, SAM and basic leucine zipper domain-containing protein 1 (475 aa).

Positions 1-23 (MAAARFRGLAVAGGGESSESEDD) are disordered. A phosphoserine mark is found at Ser-17, Ser-18, and Ser-20. ANK repeat units follow at residues 45 to 74 (EKNE…SVDS), 78 to 107 (YGWT…KASF), 110 to 144 (DKQT…DPNV), 148 to 177 (RLMT…EVNT), 181 to 210 (NGYT…NKML), and 214 to 243 (DGKT…PLEG). The SAM domain occupies 272–334 (SYTAFGDLEI…KILAALKELE (63 aa)).

In terms of assembly, interacts with DDX4, PIWIL1, RANBP9 and TDRD1.

It is found in the cytoplasm. Plays a central role during spermatogenesis by repressing transposable elements and preventing their mobilization, which is essential for the germline integrity. Acts via the piRNA metabolic process, which mediates the repression of transposable elements during meiosis by forming complexes composed of piRNAs and Piwi proteins and governs the methylation and subsequent repression of transposons. Its association with pi-bodies suggests a participation in the primary piRNAs metabolic process. Required prior to the pachytene stage to facilitate the production of multiple types of piRNAs, including those associated with repeats involved in the regulation of retrotransposons. May act by mediating protein-protein interactions during germ cell maturation. This chain is Ankyrin repeat, SAM and basic leucine zipper domain-containing protein 1 (ASZ1), found in Equus caballus (Horse).